Consider the following 862-residue polypeptide: Squamosa promoter-binding-like protein 1 (862 aa).

Residues 55 to 98 (KRRRVSPEDDDGEECINAATTNGDDGQISGQRGRSSEDEMPRQG) form a disordered region. Residues 72–87 (AATTNGDDGQISGQRG) show a composition bias toward polar residues. An SBP-type zinc finger spans residues 104–181 (GPCCQVDGCT…AQHNRRRRKV (78 aa)). 8 residues coordinate Zn(2+): cysteine 107, cysteine 112, cysteine 129, histidine 132, cysteine 148, cysteine 151, histidine 155, and cysteine 167. The short motif at 164–180 (KKSCRSRLAQHNRRRRK) is the Bipartite nuclear localization signal element.

As to expression, ubiquitous.

It is found in the nucleus. In terms of biological role, trans-acting factor that binds specifically to the consensus nucleotide sequence 5'-TNCGTACAA-3'. The protein is Squamosa promoter-binding-like protein 1 (SPL1) of Oryza sativa subsp. japonica (Rice).